The following is a 349-amino-acid chain: Protein MGF 360-12L (349 aa).

An ANK repeat occupies 57–89; sequence DLNTALVKAVRENNYNLIKLFTEWGADINYGLV.

Belongs to the asfivirus MGF 360 family.

In terms of biological role, plays a role in virus cell tropism, and may be required for efficient virus replication in macrophages. This chain is Protein MGF 360-12L, found in African swine fever virus (isolate Tick/Malawi/Lil 20-1/1983) (ASFV).